Here is a 265-residue protein sequence, read N- to C-terminus: Isoprenyl transferase 1 (265 aa).

Residue aspartate 43 is part of the active site. A Mg(2+)-binding site is contributed by aspartate 43. Residues 44-47, tryptophan 48, histidine 61, and 89-91 each bind substrate; these read GNRR and STE. Asparagine 92 functions as the Proton acceptor in the catalytic mechanism. Substrate is bound by residues arginine 95, arginine 214, and 220-222; that span reads RLS. Glutamate 233 serves as a coordination point for Mg(2+).

This sequence belongs to the UPP synthase family. In terms of assembly, homodimer. Mg(2+) is required as a cofactor.

In terms of biological role, catalyzes the condensation of isopentenyl diphosphate (IPP) with allylic pyrophosphates generating different type of terpenoids. This Corynebacterium diphtheriae (strain ATCC 700971 / NCTC 13129 / Biotype gravis) protein is Isoprenyl transferase 1.